The chain runs to 255 residues: F-box/SPRY domain-containing protein 1 (255 aa).

Positions 3 to 51 (DPVAALCNYNVLEVIFSYLELDDLSHCSQVCKSWYHFLNDENSDVWRWH) constitute an F-box domain. The 193-residue stretch at 61–253 (LKSDLLSSVS…VSMVYLGTPL (193 aa)) folds into the B30.2/SPRY domain.

The protein belongs to the FBXO45/Fsn family. As to quaternary structure, component of an E3 ubiquitin ligase complex composed of hiw and Fsn.

Its subcellular location is the synapse. The protein operates within protein modification; protein ubiquitination. Required in the presynaptic motoneuron to down-regulate the levels of wnd and restrain synaptic terminal growth at the neuromuscular junction (NMJ). The chain is F-box/SPRY domain-containing protein 1 from Drosophila simulans (Fruit fly).